Here is a 120-residue protein sequence, read N- to C-terminus: Ribosome-binding factor A (120 aa).

The protein belongs to the RbfA family. Monomer. Binds 30S ribosomal subunits, but not 50S ribosomal subunits or 70S ribosomes.

Its subcellular location is the cytoplasm. Its function is as follows. One of several proteins that assist in the late maturation steps of the functional core of the 30S ribosomal subunit. Associates with free 30S ribosomal subunits (but not with 30S subunits that are part of 70S ribosomes or polysomes). Required for efficient processing of 16S rRNA. May interact with the 5'-terminal helix region of 16S rRNA. This is Ribosome-binding factor A from Dictyoglomus thermophilum (strain ATCC 35947 / DSM 3960 / H-6-12).